Reading from the N-terminus, the 147-residue chain is Cyanate hydratase (147 aa).

Active-site residues include Arg-88, Glu-91, and Ser-114.

It belongs to the cyanase family.

The enzyme catalyses cyanate + hydrogencarbonate + 3 H(+) = NH4(+) + 2 CO2. Catalyzes the reaction of cyanate with bicarbonate to produce ammonia and carbon dioxide. In Cupriavidus necator (strain ATCC 17699 / DSM 428 / KCTC 22496 / NCIMB 10442 / H16 / Stanier 337) (Ralstonia eutropha), this protein is Cyanate hydratase.